A 653-amino-acid polypeptide reads, in one-letter code: Chromosomal replication initiator protein DnaA (653 aa).

The domain I, interacts with DnaA modulators stretch occupies residues 1–100 (MADVPADLAA…SAGEPPASAS (100 aa)). A disordered region spans residues 86–310 (ITVDDSAGEP…PAPATGPGEP (225 aa)). A domain II region spans residues 101–312 (PAPPRYEEPE…PATGPGEPTA (212 aa)). Composition is skewed to basic and acidic residues over residues 120–150 (DPYE…DRHQ) and 221–267 (PSYD…RRNI). Residues 284-310 (GSALPASSGAPGPLAAQPAPATGPGEP) are compositionally biased toward low complexity. The tract at residues 313 to 529 (RLNPKYLFDT…GALIRVTAFA (217 aa)) is domain III, AAA+ region. ATP contacts are provided by G357, G359, K360, and T361. The segment at 530–653 (SLNRQPVDLG…TELTNRIKNG (124 aa)) is domain IV, binds dsDNA.

It belongs to the DnaA family. In terms of assembly, oligomerizes as a right-handed, spiral filament on DNA at oriC.

The protein localises to the cytoplasm. Plays an essential role in the initiation and regulation of chromosomal replication. ATP-DnaA binds to the origin of replication (oriC) to initiate formation of the DNA replication initiation complex once per cell cycle. Binds the DnaA box (a 9 base pair repeat at the origin) and separates the double-stranded (ds)DNA. Forms a right-handed helical filament on oriC DNA; dsDNA binds to the exterior of the filament while single-stranded (ss)DNA is stabiized in the filament's interior. The ATP-DnaA-oriC complex binds and stabilizes one strand of the AT-rich DNA unwinding element (DUE), permitting loading of DNA polymerase. After initiation quickly degrades to an ADP-DnaA complex that is not apt for DNA replication. Binds acidic phospholipids. This chain is Chromosomal replication initiator protein DnaA, found in Streptomyces avermitilis (strain ATCC 31267 / DSM 46492 / JCM 5070 / NBRC 14893 / NCIMB 12804 / NRRL 8165 / MA-4680).